Reading from the N-terminus, the 312-residue chain is RNA-binding protein Raly (312 aa).

Position 2 is an N-acetylserine (S2). Residue K4 forms a Glycyl lysine isopeptide (Lys-Gly) (interchain with G-Cter in SUMO2) linkage. The region spanning 21-92 (SRVFIGNLNT…QTLDINMAGE (72 aa)) is the RRM domain. K44 is modified (N6-acetyllysine). Residues K94 and K99 each participate in a glycyl lysine isopeptide (Lys-Gly) (interchain with G-Cter in SUMO2) cross-link. S135 is subject to Phosphoserine. A Glycyl lysine isopeptide (Lys-Gly) (interchain with G-Cter in SUMO2) cross-link involves residue K159. Residue K165 is modified to N6-acetyllysine; alternate. A Glycyl lysine isopeptide (Lys-Gly) (interchain with G-Cter in SUMO2); alternate cross-link involves residue K165. Residues K179 and K191 each participate in a glycyl lysine isopeptide (Lys-Gly) (interchain with G-Cter in SUMO2) cross-link. Residues 184-216 (SSELQTIKTELTQIKSNIDALLGRLEQIAEEQK) adopt a coiled-coil conformation. Residues 214–226 (EQKANPDGKKKGD) are compositionally biased toward basic and acidic residues. The tract at residues 214–312 (EQKANPDGKK…DTDAEDGALQ (99 aa)) is disordered. Gly residues predominate over residues 228–253 (SSGGGGGSSGGGGSSNVGGGSSGGSG). T268 bears the Phosphothreonine mark. S270 carries the phosphoserine modification. T274 and T292 each carry phosphothreonine. The span at 293-303 (HSEEELEHSQD) shows a compositional bias: basic and acidic residues. Residues S294 and S301 each carry the phosphoserine modification. At T304 the chain carries Phosphothreonine.

The protein belongs to the RRM HNRPC family. RALY subfamily. Identified in the spliceosome C complex. Interacts (through its RNA-binding domain) with FUS (through its RNA-binding domain); both are components of the same RNPs. Widely expressed. Expressed in brain, testis, lung, spleen and kidney. Weakly expressed in liver.

The protein resides in the nucleus. Its function is as follows. RNA-binding protein that acts as a transcriptional cofactor for cholesterol biosynthetic genes in the liver. Binds the lipid-responsive non-coding RNA LeXis and is required for LeXis-mediated effect on cholesterogenesis. May be a heterogeneous nuclear ribonucleoprotein (hnRNP). This chain is RNA-binding protein Raly (Raly), found in Mus musculus (Mouse).